The chain runs to 1034 residues: FERM domain-containing protein 4B (1034 aa).

In terms of domain architecture, FERM spans 59 to 361; sequence RHCQVHLLDD…SQHQFYLDRK (303 aa). S372 carries the post-translational modification Phosphoserine. 2 coiled-coil regions span residues 417 to 450 and 531 to 561; these read EVSEEQKREKILELKKKEKLLQEKLLKKVEELKK and KKKRKQDYTDAMKKLQEIENAINEYRIRCGK. The necessary for adherens junction and tight junction localization stretch occupies residues 542–971; sequence MKKLQEIENA…TQLTIGLSDY (430 aa). The span at 576 to 589 shows a compositional bias: low complexity; it reads PSESSSLSDTTTYD. 4 disordered regions span residues 576-614, 635-698, 712-735, and 752-786; these read PSESSSLSDTTTYDDPSDAFTFPGQRSSSVPHSPRILPP, DTRQ…LESQ, FSLSKSQRSSSTEILDDGSSYTSQ, and TTQTLDTRTRGRRRSKKQNVSTSNSGSMPNLAQKD. At S608 the chain carries Phosphoserine. Polar residues-rich tracts occupy residues 635 to 650 and 663 to 674; these read DTRQSREMLSTHSSPY and MPTTPVLTRNAY. Low complexity predominate over residues 675–685; the sequence is SSSHLEPESSS. S697 is subject to Phosphoserine. Low complexity predominate over residues 713–722; that stretch reads SLSKSQRSSS. Over residues 769–781 the composition is skewed to polar residues; it reads QNVSTSNSGSMPN. K882 is covalently cross-linked (Glycyl lysine isopeptide (Lys-Gly) (interchain with G-Cter in SUMO2)). 2 disordered regions span residues 905 to 925 and 1004 to 1034; these read RASGQKDQGHSPQTSFDSDRG and DGTDGNQLEDNLESSEQRLFWHEDSKPGTLV. Positions 906 to 920 are enriched in polar residues; it reads ASGQKDQGHSPQTSF. S915 is modified (phosphoserine). The segment covering 1018-1034 has biased composition (basic and acidic residues); sequence SEQRLFWHEDSKPGTLV. Residue K1029 forms a Glycyl lysine isopeptide (Lys-Gly) (interchain with G-Cter in SUMO2) linkage.

In terms of assembly, interacts with CYTH3. Interacts with PARD3. Interacts with CYTH1.

Its subcellular location is the cytoplasm. It localises to the cytoskeleton. It is found in the cell junction. The protein localises to the tight junction. The protein resides in the adherens junction. Its function is as follows. Member of GRP1 signaling complexes that are acutely recruited to plasma membrane ruffles in response to insulin receptor signaling. May function as a scaffolding protein that regulates epithelial cell polarity by connecting ARF6 activation with the PAR3 complex. Plays a redundant role with FRMD4A in epithelial polarization. The chain is FERM domain-containing protein 4B from Homo sapiens (Human).